A 1015-amino-acid polypeptide reads, in one-letter code: Condensin complex subunit 3 (1015 aa).

5 HEAT repeats span residues 94-131 (GLLN…SMPE), 138-173 (DVFD…QDPK), 174-212 (DDEC…TLPK), 238-275 (MRAM…GWLR), and 276-313 (FSEG…LSEL). Ser390 is modified (phosphoserine). HEAT repeat units follow at residues 399–436 (EFIG…LPTI), 439–478 (SLVS…TVGV), and 617–654 (DFAR…TFGI). Ser674 is modified (phosphoserine). HEAT repeat units lie at residues 687–724 (ATAK…SGLL) and 865–907 (KDLL…QAEA). Thr931 is modified (phosphothreonine). Residues 941-950 (ASKSTQLKTN) show a composition bias toward polar residues. The segment at 941-994 (ASKSTQLKTNRGQRKVTVSARTNRRCQTAEADSESDHEVPEPESEMKMRLPRRA) is disordered. Ser973, Ser975, Ser1002, and Ser1015 each carry phosphoserine. Residues 974–988 (ESDHEVPEPESEMKM) are compositionally biased toward basic and acidic residues.

This sequence belongs to the CND3 (condensin subunit 3) family. As to quaternary structure, component of the condensin complex, which contains the SMC2 and SMC4 heterodimer, and three non SMC subunits that probably regulate the complex: NCAPH/BRRN1, NCAPD2/CAPD2 and NCAPG. Phosphorylated by CDK1. Its phosphorylation, as well as that of NCAPD2 and NCAPH subunits, activates the condensin complex and is required for chromosome condensation. In terms of tissue distribution, highly expressed in testis.

Its subcellular location is the nucleus. It is found in the cytoplasm. It localises to the chromosome. Functionally, regulatory subunit of the condensin complex, a complex required for conversion of interphase chromatin into mitotic-like condense chromosomes. The condensin complex probably introduces positive supercoils into relaxed DNA in the presence of type I topoisomerases and converts nicked DNA into positive knotted forms in the presence of type II topoisomerases. This chain is Condensin complex subunit 3 (NCAPG), found in Homo sapiens (Human).